The following is a 103-amino-acid chain: Large ribosomal subunit protein bL21 (103 aa).

Belongs to the bacterial ribosomal protein bL21 family. Part of the 50S ribosomal subunit. Contacts protein L20.

In terms of biological role, this protein binds to 23S rRNA in the presence of protein L20. In Klebsiella pneumoniae (strain 342), this protein is Large ribosomal subunit protein bL21.